The sequence spans 557 residues: uncharacterized protein (557 aa).

The 200-residue stretch at 7–206 (SSFIDMLRLG…FACFLEGMLS (200 aa)) folds into the DhaL domain.

This is an uncharacterized protein from Mycoplasma genitalium (strain ATCC 33530 / DSM 19775 / NCTC 10195 / G37) (Mycoplasmoides genitalium).